Here is an 870-residue protein sequence, read N- to C-terminus: Probable disease resistance protein At1g59620 (870 aa).

The region spanning 123–432 is the NB-ARC domain; sequence DKRNMRQTFS…AAEGMPRPRY (310 aa). 167-174 is a binding site for ATP; that stretch reads GMGGIGKT. 6 LRR repeats span residues 543-567, 568-590, 703-726, 735-758, 759-786, and 808-833; these read LQLM…IGLL, IHLR…MQNL, MSGI…IYMP, PWHL…ILEK, LLQL…GFPQ, and MPRL…KFIT.

This sequence belongs to the disease resistance NB-LRR family.

Functionally, probable disease resistance protein. The protein is Probable disease resistance protein At1g59620 of Arabidopsis thaliana (Mouse-ear cress).